The following is a 159-amino-acid chain: NADH-quinone oxidoreductase subunit I (159 aa).

2 4Fe-4S ferredoxin-type domains span residues 51–80 (RRYE…IEAD) and 90–119 (TRYD…EGPN). [4Fe-4S] cluster contacts are provided by C60, C63, C66, C70, C99, C102, C105, and C109.

Belongs to the complex I 23 kDa subunit family. NDH-1 is composed of 14 different subunits. Subunits NuoA, H, J, K, L, M, N constitute the membrane sector of the complex. It depends on [4Fe-4S] cluster as a cofactor.

The protein localises to the cell inner membrane. The catalysed reaction is a quinone + NADH + 5 H(+)(in) = a quinol + NAD(+) + 4 H(+)(out). Functionally, NDH-1 shuttles electrons from NADH, via FMN and iron-sulfur (Fe-S) centers, to quinones in the respiratory chain. The immediate electron acceptor for the enzyme in this species is believed to be ubiquinone. Couples the redox reaction to proton translocation (for every two electrons transferred, four hydrogen ions are translocated across the cytoplasmic membrane), and thus conserves the redox energy in a proton gradient. The polypeptide is NADH-quinone oxidoreductase subunit I (Rickettsia felis (strain ATCC VR-1525 / URRWXCal2) (Rickettsia azadi)).